The chain runs to 823 residues: MFYVIGGIIVSVVAFFFTIKFLFELAARVVSFLQNEDRERRGDRTIYDYVRGNYLDPRSCKVSWDWKDPYEVGHSMAFRVHLFYKNGQPFPAHRPVGLRVHISHVELAVDIPVTQEVLQEPNSNVVKVAFTVRKAGRYEITVKLGGLNVAYSPYYKIFQPGMVVPSKTKIVCHFSTLVLTCGQPHTLQIVPRDEYDNPTNNSMSLRDEHSYSLAIHELGPQEEENNEVSFEKSVTSNRQTCQVFLRLTLHSRGCFHACISYQNQPINNGEFDIIVLSENEKNIVERNVSTSGVSIYFEAYLYNANNCTSTPWHLPPMHMSSSQRRPSTAIEEDDEDSPSECHTPEKVKKPKKVYCYVSPKQFSVKEFYLKIIPWRLYTFRVCPGTKFSYLGPDPVHKLLTLVVDDGIQPPVELSCKERNILAATFIRSLHKNIGGSETFQDKVNFFQRELRQVHMKRPHSKVTLKVSRHALLESSLKATRNFSISDWSKNFEVVFQDEEALDWGGPRREWFELICKALFDTTSQLFARFTDSNQALVHPNPNRPAHLRLKMYEFAGRLVGKCLYESSLGGAYKQLVRARFTRSFLAQIIGLRMHYKYFETDDPEFYKSKVCFILNNDMSEMELVFAEEKYNKSGQLDKIVELMTGGAQTPVTNANKIFYLNLLAQYRLASQVKEEVEHFLKGLNELVPENLLAIFDENELELLMCGTGDINVSDFKAHAVVVGGSWHFREKVMRWFWAVVSSLTQEELARLLQFTTGSSQLPPGGFAALCPSFQIIAAPTHSTLPTAHTCFNQLCLPTYDSYEEVHRMLQLAISEGCEGFGML.

The Filamin repeat unit spans residues 64-158; the sequence is WDWKDPYEVG…VAYSPYYKIF (95 aa). Residues 315–345 are disordered; it reads PPMHMSSSQRRPSTAIEEDDEDSPSECHTPE. Positions 483–789 are interaction with SOCS2; sequence SISDWSKNFE…THSTLPTAHT (307 aa). The 341-residue stretch at 483-823 folds into the HECT domain; that stretch reads SISDWSKNFE…SEGCEGFGML (341 aa). Residue Cys-790 is the Glycyl thioester intermediate of the active site.

As to quaternary structure, interacts with SOCS2. Interacts (via HECT domain) with HTRA2, DIABLO/SMAC and SEPTIN4; in the cytoplasm following induction of apoptosis. Autoubiquitinated in vitro in the presence of E2 enzyme UBE2D1/UBCH5A. In terms of tissue distribution, detected in brain, testis, heart, liver, lung and kidney with very low levels in skeletal muscle and spleen.

The catalysed reaction is S-ubiquitinyl-[E2 ubiquitin-conjugating enzyme]-L-cysteine + [acceptor protein]-L-lysine = [E2 ubiquitin-conjugating enzyme]-L-cysteine + N(6)-ubiquitinyl-[acceptor protein]-L-lysine.. It participates in protein modification; protein ubiquitination. Its function is as follows. E3 ubiquitin-protein ligase that catalyzes 'Lys-11'- or 'Lys-33'-linked polyubiquitin chains, with some preference for 'Lys-33' linkages. E3 ubiquitin-protein ligases accept ubiquitin from an E2 ubiquitin-conjugating enzyme in the form of a thioester and then directly transfers the ubiquitin to targeted substrates. Ubiquitinates SEPTIN4, DIABLO/SMAC and HTRA2 in vitro. Modulates pulmonary inflammation by targeting SOCS2 for ubiquitination and subsequent degradation by the proteasome. In Mus musculus (Mouse), this protein is Apoptosis-resistant E3 ubiquitin protein ligase 1 (Arel1).